The sequence spans 304 residues: Putative S-adenosyl-L-methionine-dependent methyltransferase MAV_1058 (304 aa).

S-adenosyl-L-methionine-binding positions include D128 and 157–158; that span reads DL.

This sequence belongs to the UPF0677 family.

Exhibits S-adenosyl-L-methionine-dependent methyltransferase activity. This Mycobacterium avium (strain 104) protein is Putative S-adenosyl-L-methionine-dependent methyltransferase MAV_1058.